The following is a 305-amino-acid chain: Plant-type L-asparaginase (305 aa).

The Nucleophile role is filled by threonine 175. Substrate is bound by residues 202–205 (RVGD) and 224–227 (TGLG).

The protein belongs to the Ntn-hydrolase family. Heterotetramer of two alpha and two beta chains arranged as a dimer of alpha/beta heterodimers. Post-translationally, autocleaved. Generates the alpha and beta subunits. The N-terminal residue of the beta subunit is thought to be responsible for the nucleophile hydrolase activity.

It catalyses the reaction L-asparagine + H2O = L-aspartate + NH4(+). In terms of biological role, catalyzes the hydrolysis of L-asparagine into L-aspartate and ammonia. In Pyrococcus horikoshii (strain ATCC 700860 / DSM 12428 / JCM 9974 / NBRC 100139 / OT-3), this protein is Plant-type L-asparaginase.